A 220-amino-acid chain; its full sequence is Ribosomal RNA small subunit methyltransferase Nep1 (220 aa).

S-adenosyl-L-methionine-binding positions include Gly-178, Gly-183, and 196–201 (LYREPL).

The protein belongs to the class IV-like SAM-binding methyltransferase superfamily. RNA methyltransferase NEP1 family. Homodimer.

The enzyme catalyses a pseudouridine in rRNA + S-adenosyl-L-methionine = an N(1)-methylpseudouridine in rRNA + S-adenosyl-L-homocysteine + H(+). In terms of biological role, methyltransferase involved in ribosomal biogenesis. Specifically catalyzes the N1-methylation of the pseudouridine corresponding to position 914 in M.jannaschii 16S rRNA. The protein is Ribosomal RNA small subunit methyltransferase Nep1 of Thermococcus kodakarensis (strain ATCC BAA-918 / JCM 12380 / KOD1) (Pyrococcus kodakaraensis (strain KOD1)).